Here is a 339-residue protein sequence, read N- to C-terminus: MO25-like protein 3 (339 aa).

Belongs to the Mo25 family.

This is MO25-like protein 3 (mop-25.3) from Caenorhabditis elegans.